A 436-amino-acid chain; its full sequence is 3-ketoacyl-CoA thiolase (436 aa).

Catalysis depends on Cys-99, which acts as the Acyl-thioester intermediate. Residues His-392 and Cys-422 each act as proton acceptor in the active site.

It belongs to the thiolase-like superfamily. Thiolase family. Heterotetramer of two alpha chains (FadJ) and two beta chains (FadI).

It is found in the cytoplasm. It carries out the reaction an acyl-CoA + acetyl-CoA = a 3-oxoacyl-CoA + CoA. It participates in lipid metabolism; fatty acid beta-oxidation. Catalyzes the final step of fatty acid oxidation in which acetyl-CoA is released and the CoA ester of a fatty acid two carbons shorter is formed. The protein is 3-ketoacyl-CoA thiolase of Shewanella denitrificans (strain OS217 / ATCC BAA-1090 / DSM 15013).